We begin with the raw amino-acid sequence, 397 residues long: B3 domain-containing protein At4g34400 (397 aa).

Positions 14–107 form a DNA-binding region, TF-B3; that stretch reads PRFFTVFVSH…IFEVSIFRGY (94 aa). The tract at residues 118 to 255 is disordered; sequence ELEEEEEDSV…SSYAPDKEDT (138 aa). The segment covering 137-160 has biased composition (basic and acidic residues); sequence TGAKSEMKNTVPEGRDKGKSKVEV. Composition is skewed to acidic residues over residues 161-186, 212-227, and 235-246; these read VEDS…TDTD, SSDD…DSDY, and DIEENSISEEDS.

It localises to the nucleus. This Arabidopsis thaliana (Mouse-ear cress) protein is B3 domain-containing protein At4g34400.